The following is a 492-amino-acid chain: Aspartyl/glutamyl-tRNA(Asn/Gln) amidotransferase subunit B (492 aa).

The protein belongs to the GatB/GatE family. GatB subfamily. As to quaternary structure, heterotrimer of A, B and C subunits.

It catalyses the reaction L-glutamyl-tRNA(Gln) + L-glutamine + ATP + H2O = L-glutaminyl-tRNA(Gln) + L-glutamate + ADP + phosphate + H(+). It carries out the reaction L-aspartyl-tRNA(Asn) + L-glutamine + ATP + H2O = L-asparaginyl-tRNA(Asn) + L-glutamate + ADP + phosphate + 2 H(+). Functionally, allows the formation of correctly charged Asn-tRNA(Asn) or Gln-tRNA(Gln) through the transamidation of misacylated Asp-tRNA(Asn) or Glu-tRNA(Gln) in organisms which lack either or both of asparaginyl-tRNA or glutaminyl-tRNA synthetases. The reaction takes place in the presence of glutamine and ATP through an activated phospho-Asp-tRNA(Asn) or phospho-Glu-tRNA(Gln). The polypeptide is Aspartyl/glutamyl-tRNA(Asn/Gln) amidotransferase subunit B (Dehalococcoides mccartyi (strain CBDB1)).